The sequence spans 179 residues: Large ribosomal subunit protein uL5 (179 aa).

Belongs to the universal ribosomal protein uL5 family. Part of the 50S ribosomal subunit; part of the 5S rRNA/L5/L18/L25 subcomplex. Contacts the 5S rRNA and the P site tRNA. Forms a bridge to the 30S subunit in the 70S ribosome.

Functionally, this is one of the proteins that bind and probably mediate the attachment of the 5S RNA into the large ribosomal subunit, where it forms part of the central protuberance. In the 70S ribosome it contacts protein S13 of the 30S subunit (bridge B1b), connecting the 2 subunits; this bridge is implicated in subunit movement. Contacts the P site tRNA; the 5S rRNA and some of its associated proteins might help stabilize positioning of ribosome-bound tRNAs. The sequence is that of Large ribosomal subunit protein uL5 from Geobacillus sp. (strain WCH70).